The following is a 475-amino-acid chain: Homeobox even-skipped homolog protein 2 (475 aa).

Disordered stretches follow at residues 82–113 (PSSE…AEAD) and 155–189 (TSAS…SGAD). A compositionally biased stretch (low complexity) spans 83–96 (SSESTVSSEIASAT). Gly residues predominate over residues 160-186 (SGLGSLHGGGGGGNSGAAALGGSGSGS). The homeobox DNA-binding region spans 191-250 (VRRYRTAFTREQIARLEKEFYRENYVSRPRRCELAAALNLPETTIKVWFQNRRMKDKRQR).

Belongs to the even-skipped homeobox family.

The protein resides in the nucleus. This chain is Homeobox even-skipped homolog protein 2 (Evx2), found in Mus musculus (Mouse).